The primary structure comprises 400 residues: Tryptophan synthase beta chain (400 aa).

K90 is modified (N6-(pyridoxal phosphate)lysine).

Belongs to the TrpB family. As to quaternary structure, tetramer of two alpha and two beta chains. Pyridoxal 5'-phosphate serves as cofactor.

The enzyme catalyses (1S,2R)-1-C-(indol-3-yl)glycerol 3-phosphate + L-serine = D-glyceraldehyde 3-phosphate + L-tryptophan + H2O. It functions in the pathway amino-acid biosynthesis; L-tryptophan biosynthesis; L-tryptophan from chorismate: step 5/5. In terms of biological role, the beta subunit is responsible for the synthesis of L-tryptophan from indole and L-serine. This is Tryptophan synthase beta chain from Bacillus velezensis (strain DSM 23117 / BGSC 10A6 / LMG 26770 / FZB42) (Bacillus amyloliquefaciens subsp. plantarum).